The primary structure comprises 340 residues: Tryptophan--tRNA ligase (340 aa).

ATP contacts are provided by residues 11 to 13 (RPT) and 19 to 20 (GH). The 'HIGH' region motif lies at 12–20 (PTGKLHLGH). Residue D140 coordinates L-tryptophan. ATP contacts are provided by residues 152-154 (GND), L194, and 202-206 (KMSKS). The 'KMSKS' region motif lies at 202–206 (KMSKS).

Belongs to the class-I aminoacyl-tRNA synthetase family. Homodimer.

It is found in the cytoplasm. The catalysed reaction is tRNA(Trp) + L-tryptophan + ATP = L-tryptophyl-tRNA(Trp) + AMP + diphosphate + H(+). In terms of biological role, catalyzes the attachment of tryptophan to tRNA(Trp). This chain is Tryptophan--tRNA ligase, found in Streptococcus pyogenes serotype M3 (strain ATCC BAA-595 / MGAS315).